Consider the following 380-residue polypeptide: Queuine tRNA-ribosyltransferase (380 aa).

Aspartate 96 functions as the Proton acceptor in the catalytic mechanism. Substrate-binding positions include 96-100 (DSGGF), aspartate 150, glutamine 193, and glycine 220. The tract at residues 251–257 (GVGAPDS) is RNA binding. Aspartate 270 (nucleophile) is an active-site residue. The segment at 275–279 (TRIAR) is RNA binding; important for wobble base 34 recognition. Zn(2+) contacts are provided by cysteine 308, cysteine 310, cysteine 313, and histidine 339.

The protein belongs to the queuine tRNA-ribosyltransferase family. As to quaternary structure, homodimer. Within each dimer, one monomer is responsible for RNA recognition and catalysis, while the other monomer binds to the replacement base PreQ1. Zn(2+) serves as cofactor.

The catalysed reaction is 7-aminomethyl-7-carbaguanine + guanosine(34) in tRNA = 7-aminomethyl-7-carbaguanosine(34) in tRNA + guanine. Its pathway is tRNA modification; tRNA-queuosine biosynthesis. Its function is as follows. Catalyzes the base-exchange of a guanine (G) residue with the queuine precursor 7-aminomethyl-7-deazaguanine (PreQ1) at position 34 (anticodon wobble position) in tRNAs with GU(N) anticodons (tRNA-Asp, -Asn, -His and -Tyr). Catalysis occurs through a double-displacement mechanism. The nucleophile active site attacks the C1' of nucleotide 34 to detach the guanine base from the RNA, forming a covalent enzyme-RNA intermediate. The proton acceptor active site deprotonates the incoming PreQ1, allowing a nucleophilic attack on the C1' of the ribose to form the product. After dissociation, two additional enzymatic reactions on the tRNA convert PreQ1 to queuine (Q), resulting in the hypermodified nucleoside queuosine (7-(((4,5-cis-dihydroxy-2-cyclopenten-1-yl)amino)methyl)-7-deazaguanosine). In Streptococcus suis (strain 98HAH33), this protein is Queuine tRNA-ribosyltransferase.